The primary structure comprises 258 residues: 2S seed storage albumin protein (258 aa).

An N-terminal signal peptide occupies residues 1–24; sequence MAKLIPTIALVSVLLFIIANASFA. A propeptide spanning residues 25 to 35 is cleaved from the precursor; sequence YRTTITTIEID. 4 disulfide bridges follow: cysteine 49-cysteine 108, cysteine 61-cysteine 97, cysteine 98-cysteine 145, and cysteine 110-cysteine 149. The interval 64–87 is disordered; it reads YLRQSSSRRSPGEEVLRMPGDENQ. Residue serine 69 is modified to Phosphoserine. The span at 73–83 shows a compositional bias: basic and acidic residues; the sequence is SPGEEVLRMPG. Residues 77 to 86 constitute a propeptide that is removed on maturation; the sequence is EVLRMPGDEN. Glutamine 87 carries the post-translational modification Pyrrolidone carboxylic acid. 2 consecutive propeptides follow at residues 154–156 and 191–193; these read RTN and SDN. Cystine bridges form between cysteine 162/cysteine 212, cysteine 175/cysteine 201, cysteine 202/cysteine 249, and cysteine 214/cysteine 256. A Pyrrolidone carboxylic acid modification is found at glutamine 194.

Belongs to the 2S seed storage albumins family. In terms of assembly, the 2 mature proteins consist of heterodimers of a small and a large chain; disulfide-linked. The N-terminus of both large chains is blocked. In terms of processing, the C-terminus of the allergen Ric c 1 and allergen Ric c 3 small chains are heterogeneous and the length of the chains can vary from 33 to 36 amino acids and from 36 to 40 amino acids respectively.

In terms of biological role, 2S seed storage proteins. The protein is 2S seed storage albumin protein of Ricinus communis (Castor bean).